A 338-amino-acid polypeptide reads, in one-letter code: tRNA N6-adenosine threonylcarbamoyltransferase (338 aa).

2 residues coordinate Fe cation: H111 and H115. Substrate is bound by residues 134–138 (VVSGG), D167, G180, D184, and N272. D300 serves as a coordination point for Fe cation.

The protein belongs to the KAE1 / TsaD family. Fe(2+) is required as a cofactor.

The protein resides in the cytoplasm. The enzyme catalyses L-threonylcarbamoyladenylate + adenosine(37) in tRNA = N(6)-L-threonylcarbamoyladenosine(37) in tRNA + AMP + H(+). Required for the formation of a threonylcarbamoyl group on adenosine at position 37 (t(6)A37) in tRNAs that read codons beginning with adenine. Is involved in the transfer of the threonylcarbamoyl moiety of threonylcarbamoyl-AMP (TC-AMP) to the N6 group of A37, together with TsaE and TsaB. TsaD likely plays a direct catalytic role in this reaction. In Syntrophus aciditrophicus (strain SB), this protein is tRNA N6-adenosine threonylcarbamoyltransferase.